The following is a 327-amino-acid chain: Probable protein phosphatase 2C 59 (327 aa).

Residues 1-24 (MREVLLLGSLVVLALLSLFPCCSC) form the signal peptide. A PPM-type phosphatase domain is found at 64-310 (SYGYASSPGK…DNITCLVVRF (247 aa)). Residues Asp100, Gly101, Asp262, and Asp301 each contribute to the Mn(2+) site.

Belongs to the PP2C family. It depends on Mg(2+) as a cofactor. Mn(2+) serves as cofactor.

The enzyme catalyses O-phospho-L-seryl-[protein] + H2O = L-seryl-[protein] + phosphate. The catalysed reaction is O-phospho-L-threonyl-[protein] + H2O = L-threonyl-[protein] + phosphate. This is Probable protein phosphatase 2C 59 from Oryza sativa subsp. japonica (Rice).